A 121-amino-acid chain; its full sequence is NADH-quinone oxidoreductase subunit A 2 (121 aa).

The next 3 helical transmembrane spans lie at 6 to 26 (FLPV…TLFV), 60 to 80 (VPFF…MFLF), and 89 to 109 (IGFV…VGFA).

This sequence belongs to the complex I subunit 3 family. NDH-1 is composed of 14 different subunits. Subunits NuoA, H, J, K, L, M, N constitute the membrane sector of the complex.

The protein localises to the cell inner membrane. It carries out the reaction a quinone + NADH + 5 H(+)(in) = a quinol + NAD(+) + 4 H(+)(out). Functionally, NDH-1 shuttles electrons from NADH, via FMN and iron-sulfur (Fe-S) centers, to quinones in the respiratory chain. The immediate electron acceptor for the enzyme in this species is believed to be ubiquinone. Couples the redox reaction to proton translocation (for every two electrons transferred, four hydrogen ions are translocated across the cytoplasmic membrane), and thus conserves the redox energy in a proton gradient. This chain is NADH-quinone oxidoreductase subunit A 2, found in Rhizobium meliloti (strain 1021) (Ensifer meliloti).